The following is a 341-amino-acid chain: Ubiquinone biosynthesis protein COQ4, mitochondrial (341 aa).

Residues 1 to 16 (MLSRISSVRIGTQVRQ) constitute a mitochondrion transit peptide. Zn(2+) is bound by residues histidine 220, aspartate 221, histidine 224, and glutamate 236.

This sequence belongs to the COQ4 family. Component of a multi-subunit COQ enzyme complex, composed of at least COQ3, COQ4, COQ5, COQ6, COQ7 and COQ9. Zn(2+) is required as a cofactor.

The protein resides in the mitochondrion inner membrane. It catalyses the reaction a 4-hydroxy-3-methoxy-5-(all-trans-polyprenyl)benzoate + H(+) = a 2-methoxy-6-(all-trans-polyprenyl)phenol + CO2. It participates in cofactor biosynthesis; ubiquinone biosynthesis. Its function is as follows. Lyase that catalyzes the C1-decarboxylation of 4-hydroxy-3-methoxy-5-(all-trans-polyprenyl)benzoic acid into 2-methoxy-6-(all-trans-polyprenyl)phenol during ubiquinone biosynthesis. This chain is Ubiquinone biosynthesis protein COQ4, mitochondrial, found in Vanderwaltozyma polyspora (strain ATCC 22028 / DSM 70294 / BCRC 21397 / CBS 2163 / NBRC 10782 / NRRL Y-8283 / UCD 57-17) (Kluyveromyces polysporus).